A 353-amino-acid polypeptide reads, in one-letter code: Melatonin receptor type 1A (353 aa).

Residues 1–26 (MRANGSELNGTVLPRDPPAEGSPRRP) form a disordered region. Residues 1–32 (MRANGSELNGTVLPRDPPAEGSPRRPPWVTST) lie on the Extracellular side of the membrane. 2 N-linked (GlcNAc...) asparagine glycosylation sites follow: Asn-4 and Asn-9. A helical transmembrane segment spans residues 33 to 53 (LATILIFTIVVDLLGNLLVIL). The Cytoplasmic portion of the chain corresponds to 54–66 (SVYRNKKLRNAGN). Residues 67 to 87 (IFVVSLAIADLVVAIYPYPLV) traverse the membrane as a helical segment. Over 88-105 (LTSVFHNGWNLGYLHCQI) the chain is Extracellular. Cys-103 and Cys-180 are joined by a disulfide. A helical transmembrane segment spans residues 106 to 126 (SGFLMGLSVIGSIFNITGIAI). Over 127–145 (NRYCYICHSLKYDKLYSDK) the chain is Cytoplasmic. A helical membrane pass occupies residues 146-166 (NSLCYVGLIWVLTVVAIVPNL). Residues 167–190 (FVGSLQYDPRIYSCTFAQSVSSAY) lie on the Extracellular side of the membrane. Residues 191–211 (TIAVVFFHFILPIAIVTYCYL) traverse the membrane as a helical segment. Topologically, residues 212–243 (RIWILVIQVRRRVKPDNNPRLKPHDFRNFVTM) are cytoplasmic. A helical membrane pass occupies residues 244-264 (FVVFVLFAVCWAPLNFIGLAV). At 265–277 (AVDPETIIPRIPE) the chain is on the extracellular side. A helical transmembrane segment spans residues 278-298 (WLFVSSYYMAYFNSCLNAIIY). Over 299–353 (GLLNQNFRREYKKIVVSFCTAKAFFQDSSNDAADRIRSKPSPLITNNNQVKVDSV) the chain is Cytoplasmic.

It belongs to the G-protein coupled receptor 1 family. As to expression, expressed in optic tectum and retina, less in neostriatum, hypothalamus and thalamus.

The protein localises to the cell membrane. High affinity receptor for melatonin. The activity of this receptor is mediated by pertussis toxin sensitive G proteins that inhibits adenylate cyclase activity. This chain is Melatonin receptor type 1A, found in Gallus gallus (Chicken).